A 160-amino-acid polypeptide reads, in one-letter code: 6,7-dimethyl-8-ribityllumazine synthase (160 aa).

5-amino-6-(D-ribitylamino)uracil-binding positions include tryptophan 27, 59–61, and 81–83; these read AIE and VVI. 86–87 contacts (2S)-2-hydroxy-3-oxobutyl phosphate; sequence QT. The active-site Proton donor is the histidine 89. Residue asparagine 114 participates in 5-amino-6-(D-ribitylamino)uracil binding. Residue arginine 128 coordinates (2S)-2-hydroxy-3-oxobutyl phosphate.

It belongs to the DMRL synthase family. In terms of assembly, homopentamer.

The enzyme catalyses (2S)-2-hydroxy-3-oxobutyl phosphate + 5-amino-6-(D-ribitylamino)uracil = 6,7-dimethyl-8-(1-D-ribityl)lumazine + phosphate + 2 H2O + H(+). The protein operates within cofactor biosynthesis; riboflavin biosynthesis; riboflavin from 2-hydroxy-3-oxobutyl phosphate and 5-amino-6-(D-ribitylamino)uracil: step 1/2. Catalyzes the formation of 6,7-dimethyl-8-ribityllumazine by condensation of 5-amino-6-(D-ribitylamino)uracil with 3,4-dihydroxy-2-butanone 4-phosphate. This is the penultimate step in the biosynthesis of riboflavin. This chain is 6,7-dimethyl-8-ribityllumazine synthase (ribH), found in Mycobacterium tuberculosis (strain CDC 1551 / Oshkosh).